Consider the following 442-residue polypeptide: ATP-dependent protease ATPase subunit HslU (442 aa).

Residues Ile-18, 60–65 (GVGKTE), Asp-255, Glu-320, and Arg-392 contribute to the ATP site.

It belongs to the ClpX chaperone family. HslU subfamily. A double ring-shaped homohexamer of HslV is capped on each side by a ring-shaped HslU homohexamer. The assembly of the HslU/HslV complex is dependent on binding of ATP.

Its subcellular location is the cytoplasm. In terms of biological role, ATPase subunit of a proteasome-like degradation complex; this subunit has chaperone activity. The binding of ATP and its subsequent hydrolysis by HslU are essential for unfolding of protein substrates subsequently hydrolyzed by HslV. HslU recognizes the N-terminal part of its protein substrates and unfolds these before they are guided to HslV for hydrolysis. The protein is ATP-dependent protease ATPase subunit HslU of Aeromonas hydrophila subsp. hydrophila (strain ATCC 7966 / DSM 30187 / BCRC 13018 / CCUG 14551 / JCM 1027 / KCTC 2358 / NCIMB 9240 / NCTC 8049).